The following is a 113-amino-acid chain: Tubulin-folding cofactor A (113 aa).

Positions 83–113 (LEETDEKEGPEIEDAKKTVADVEKQFPTEDA) are disordered. A compositionally biased stretch (basic and acidic residues) spans 89-113 (KEGPEIEDAKKTVADVEKQFPTEDA).

The protein belongs to the TBCA family. In terms of assembly, monomer. Supercomplex made of cofactors A to E. Cofactors A and D function by capturing and stabilizing tubulin in a quasi-native conformation. Cofactor E binds to the cofactor D-tubulin complex; interaction with cofactor C then causes the release of tubulin polypeptides that are committed to the native state. Interacts with TUBB9. As to expression, expressed in leaves, roots, flowers and stems.

Tubulin-folding protein involved in the control of the alpha-/beta-tubulin monomer balance. Functions as a reservoir of bound and non-toxic beta-tubulin. Required in the developing embryo. The chain is Tubulin-folding cofactor A (TFCA) from Arabidopsis thaliana (Mouse-ear cress).